The primary structure comprises 435 residues: Elongation factor 1-alpha (435 aa).

The tr-type G domain maps to 5–226 (KTHINLVVIG…DTMEPPKRPT (222 aa)). Residues 14–21 (GHVDSGKS) form a G1 region. GTP is bound at residue 14–21 (GHVDSGKS). The tract at residues 70-74 (GITID) is G2. The tract at residues 91-94 (DAPG) is G3. Residues 91-95 (DAPGH) and 151-154 (NKMD) each bind GTP. The segment at 151–154 (NKMD) is G4. The interval 190 to 192 (SGF) is G5.

The protein belongs to the TRAFAC class translation factor GTPase superfamily. Classic translation factor GTPase family. EF-Tu/EF-1A subfamily.

The protein localises to the cytoplasm. Functionally, this protein promotes the GTP-dependent binding of aminoacyl-tRNA to the A-site of ribosomes during protein biosynthesis. This is Elongation factor 1-alpha from Cryptosporidium parvum.